Reading from the N-terminus, the 266-residue chain is Apolipoprotein A-I (266 aa).

Positions 1–18 (MKAALLTLAVLFLTGSQA) are cleaved as a signal peptide. 2 consecutive repeat copies span residues 67 to 88 (LKLL…EQIG) and 89 to 110 (PVTQ…QEMS). The segment at 67 to 266 (LKLLDNWDSL…DEATKKLNAQ (200 aa)) is 10 X approximate tandem repeats. A Methionine sulfoxide modification is found at Met-109. Residues 111-121 (KDLEEVKQKVQ) form a 3; half-length repeat. 5 tandem repeats follow at residues 122 to 143 (PYLD…QKVA), 144 to 165 (PLGS…EKLS), 166 to 187 (PLAE…AQLA), 188 to 209 (PYSD…EGGG), and 210 to 231 (ASLA…EKAR). Residues 232-242 (PALEDLRQGLL) form a 9; half-length repeat. Residues 243–266 (PVLESFKVSLLAAIDEATKKLNAQ) form repeat 10.

This sequence belongs to the apolipoprotein A1/A4/E family. In terms of assembly, homodimer. Interacts with APOA1BP and CLU. Component of a sperm activating protein complex (SPAP), consisting of APOA1, an immunoglobulin heavy chain, an immunoglobulin light chain and albumin. Interacts with NDRG1. Interacts with SCGB3A2. Interacts with NAXE and YJEFN3. In terms of processing, palmitoylated. Glycosylated. Post-translationally, phosphorylation sites are present in the extracellular medium. In terms of tissue distribution, major protein of plasma HDL, also found in chylomicrons. Synthesized in the liver and small intestine.

It localises to the secreted. In terms of biological role, participates in the reverse transport of cholesterol from tissues to the liver for excretion by promoting cholesterol efflux from tissues and by acting as a cofactor for the lecithin cholesterol acyltransferase (LCAT). As part of the SPAP complex, activates spermatozoa motility. This is Apolipoprotein A-I (APOA1) from Canis lupus familiaris (Dog).